A 138-amino-acid chain; its full sequence is uncharacterized protein (138 aa).

The region spanning 3–72 (LYSISKAAEK…LEDINEFVKD (70 aa)) is the HTH merR-type domain. The segment at residues 6-25 (ISKAAEKTSISSYTLRYYEK) is a DNA-binding region (H-T-H motif).

This is an uncharacterized protein from Bacillus subtilis (strain 168).